A 151-amino-acid chain; its full sequence is Glycosylation-dependent cell adhesion molecule 1 (151 aa).

The signal sequence occupies residues 1–19 (MKFFTVLLFVSLAATSLAL). The disordered stretch occupies residues 29 to 123 (MKTQPTDAIP…ENLTKSSQTV (95 aa)). A compositionally biased stretch (low complexity) spans 42-52 (STPTSYTSEES). Basic and acidic residues predominate over residues 53 to 71 (TSSKDLSKEPSIFREELIS). Phosphoserine occurs at positions 54, 59, 63, and 71. Residues 103 to 114 (RPTTSAATTSEE) show a composition bias toward low complexity. An N-linked (GlcNAc...) asparagine glycan is attached at Asn-115.

This sequence belongs to the PP3/GlyCAM-1 family. Extensively O-glycosylated. As to expression, lymph nodes. Associated with the lumenal surface of the high endothelial venules of peripheral lymph nodes.

The protein resides in the cell membrane. Its function is as follows. Adhesion molecule that accomplishes cell binding by presenting carbohydrate(s) to the lectin domain of L-selectin. The polypeptide is Glycosylation-dependent cell adhesion molecule 1 (Glycam1) (Mus musculus (Mouse)).